Here is a 311-residue protein sequence, read N- to C-terminus: tRNA dimethylallyltransferase (311 aa).

An ATP-binding site is contributed by 10–17 (GPTASGKT). Position 12 to 17 (12 to 17 (TASGKT)) interacts with substrate. Interaction with substrate tRNA regions lie at residues 35–38 (DSAL), 159–163 (QRINR), and 240–245 (RCVGYR).

This sequence belongs to the IPP transferase family. In terms of assembly, monomer. The cofactor is Mg(2+).

The catalysed reaction is adenosine(37) in tRNA + dimethylallyl diphosphate = N(6)-dimethylallyladenosine(37) in tRNA + diphosphate. Its function is as follows. Catalyzes the transfer of a dimethylallyl group onto the adenine at position 37 in tRNAs that read codons beginning with uridine, leading to the formation of N6-(dimethylallyl)adenosine (i(6)A). This Haemophilus influenzae (strain PittEE) protein is tRNA dimethylallyltransferase.